We begin with the raw amino-acid sequence, 843 residues long: Glycogen phosphorylase, brain form (843 aa).

An N-acetylalanine modification is found at A2. S15 is modified (phosphoserine; by PHK; in form phosphorylase A). The AMP site is built by D43, Y197, and R310. Residue Y197 is modified to Phosphotyrosine. At Y473 the chain carries Phosphotyrosine. K569 contacts pyridoxal 5'-phosphate. Residues 677 to 678 form a pyridoxal 5'-phosphate region; that stretch reads TG. N6-(pyridoxal phosphate)lysine is present on K681.

Belongs to the glycogen phosphorylase family. As to quaternary structure, homodimer. Dimers associate into a tetramer to form the enzymatically active phosphorylase A. Pyridoxal 5'-phosphate is required as a cofactor. In terms of processing, phosphorylation of Ser-15 converts phosphorylase B (unphosphorylated) to phosphorylase A.

The enzyme catalyses [(1-&gt;4)-alpha-D-glucosyl](n) + phosphate = [(1-&gt;4)-alpha-D-glucosyl](n-1) + alpha-D-glucose 1-phosphate. Activity of phosphorylase is controlled both by allosteric means (through the non-covalent binding of metabolites) and by covalent modification. Thus AMP allosterically activates, whereas ATP, ADP, and glucose-6-phosphate allosterically inhibit, phosphorylase B. In terms of biological role, glycogen phosphorylase that regulates glycogen mobilization. Phosphorylase is an important allosteric enzyme in carbohydrate metabolism. Enzymes from different sources differ in their regulatory mechanisms and in their natural substrates. However, all known phosphorylases share catalytic and structural properties. The protein is Glycogen phosphorylase, brain form (PYGB) of Bos taurus (Bovine).